A 131-amino-acid polypeptide reads, in one-letter code: Small ribosomal subunit protein eS8 (131 aa).

A disordered region spans residues Asp11–Pro36. Basic residues predominate over residues Ser16–Ala30.

Belongs to the eukaryotic ribosomal protein eS8 family. As to quaternary structure, part of the 30S ribosomal subunit.

In Pyrobaculum islandicum (strain DSM 4184 / JCM 9189 / GEO3), this protein is Small ribosomal subunit protein eS8.